The chain runs to 139 residues: S-adenosylmethionine decarboxylase proenzyme (139 aa).

The active-site Schiff-base intermediate with substrate; via pyruvic acid is S63. Position 63 is a pyruvic acid (Ser); by autocatalysis (S63). H68 (proton acceptor; for processing activity) is an active-site residue. Residue C83 is the Proton donor; for catalytic activity of the active site.

Belongs to the prokaryotic AdoMetDC family. Type 1 subfamily. As to quaternary structure, heterotetramer of two alpha and two beta chains arranged as a dimer of alpha/beta heterodimers. It depends on pyruvate as a cofactor. In terms of processing, is synthesized initially as an inactive proenzyme. Formation of the active enzyme involves a self-maturation process in which the active site pyruvoyl group is generated from an internal serine residue via an autocatalytic post-translational modification. Two non-identical subunits are generated from the proenzyme in this reaction, and the pyruvate is formed at the N-terminus of the alpha chain, which is derived from the carboxyl end of the proenzyme. The post-translation cleavage follows an unusual pathway, termed non-hydrolytic serinolysis, in which the side chain hydroxyl group of the serine supplies its oxygen atom to form the C-terminus of the beta chain, while the remainder of the serine residue undergoes an oxidative deamination to produce ammonia and the pyruvoyl group blocking the N-terminus of the alpha chain.

It carries out the reaction S-adenosyl-L-methionine + H(+) = S-adenosyl 3-(methylsulfanyl)propylamine + CO2. It functions in the pathway amine and polyamine biosynthesis; S-adenosylmethioninamine biosynthesis; S-adenosylmethioninamine from S-adenosyl-L-methionine: step 1/1. In terms of biological role, catalyzes the decarboxylation of S-adenosylmethionine to S-adenosylmethioninamine (dcAdoMet), the propylamine donor required for the synthesis of the polyamines spermine and spermidine from the diamine putrescine. The protein is S-adenosylmethionine decarboxylase proenzyme of Pyrococcus horikoshii (strain ATCC 700860 / DSM 12428 / JCM 9974 / NBRC 100139 / OT-3).